Here is a 375-residue protein sequence, read N- to C-terminus: 4-hydroxy-3-methylbut-2-en-1-yl diphosphate synthase (flavodoxin) (375 aa).

Residues Cys-270, Cys-273, Cys-305, and Glu-312 each coordinate [4Fe-4S] cluster.

The protein belongs to the IspG family. The cofactor is [4Fe-4S] cluster.

The enzyme catalyses (2E)-4-hydroxy-3-methylbut-2-enyl diphosphate + oxidized [flavodoxin] + H2O + 2 H(+) = 2-C-methyl-D-erythritol 2,4-cyclic diphosphate + reduced [flavodoxin]. Its pathway is isoprenoid biosynthesis; isopentenyl diphosphate biosynthesis via DXP pathway; isopentenyl diphosphate from 1-deoxy-D-xylulose 5-phosphate: step 5/6. Functionally, converts 2C-methyl-D-erythritol 2,4-cyclodiphosphate (ME-2,4cPP) into 1-hydroxy-2-methyl-2-(E)-butenyl 4-diphosphate. This Yersinia pestis (strain Pestoides F) protein is 4-hydroxy-3-methylbut-2-en-1-yl diphosphate synthase (flavodoxin).